Here is a 153-residue protein sequence, read N- to C-terminus: Bifunctional protein GAL10 (153 aa).

The interval 1-153 (MSDDIFLVTG…IPIPEHCPME (153 aa)) is galactowaldenase.

The protein in the N-terminal section; belongs to the NAD(P)-dependent epimerase/dehydratase family. It in the C-terminal section; belongs to the aldose epimerase family. NAD(+) serves as cofactor.

It catalyses the reaction UDP-alpha-D-glucose = UDP-alpha-D-galactose. The enzyme catalyses alpha-D-glucose = beta-D-glucose. Its pathway is carbohydrate metabolism; galactose metabolism. The protein operates within carbohydrate metabolism; hexose metabolism. Its function is as follows. Mutarotase converts alpha-aldose to the beta-anomer. It is active on D-glucose, L-arabinose, D-xylose, D-galactose, maltose and lactose. The protein is Bifunctional protein GAL10 (GAL10) of Candida maltosa (Yeast).